Here is a 589-residue protein sequence, read N- to C-terminus: 3-hydroxy-3-methylglutaryl coenzyme A reductase 2-B (589 aa).

Residues 1–35 (MDVRRRPVTKTLTAGEPLKSQNQHSSSLKASDALP) are Lumenal-facing. Residues 36–56 (LPLYLTNGLFFTMFFSVMYFL) traverse the membrane as a helical segment. At 57 to 79 (LHRWREKIRNSVPLHVVTLSELA) the chain is on the cytoplasmic side. The chain crosses the membrane as a helical span at residues 80–100 (ALVLLVASVIYLLGFFGIGFV). Residues 101-544 (QSLIRPSPDS…SKESPGPNSR (444 aa)) are Lumenal-facing. A glycan (N-linked (GlcNAc...) asparagine) is linked at Asn-256. Glu-268 serves as the catalytic Charge relay system. N-linked (GlcNAc...) asparagine glycosylation occurs at Asn-332. Active-site charge relay system residues include Lys-400 and Asp-476. A helical transmembrane segment spans residues 545–565 (LLASIVAGSVLAGELSLMSAL). The Cytoplasmic portion of the chain corresponds to 566–589 (AAGQLVKSHMKFNRSSKDVSKLSS). His-574 serves as the catalytic Proton donor.

It belongs to the HMG-CoA reductase family.

It is found in the endoplasmic reticulum membrane. It catalyses the reaction (R)-mevalonate + 2 NADP(+) + CoA = (3S)-3-hydroxy-3-methylglutaryl-CoA + 2 NADPH + 2 H(+). It functions in the pathway metabolic intermediate biosynthesis; (R)-mevalonate biosynthesis; (R)-mevalonate from acetyl-CoA: step 3/3. In terms of biological role, catalyzes the synthesis of mevalonate, the specific precursor of all isoprenoid compounds present in plants. Component of the triterpene saponins (e.g. ginsenosides or panaxosides) and phytosterols biosynthetic pathways. Promotes triterpenes accumulation in roots. This chain is 3-hydroxy-3-methylglutaryl coenzyme A reductase 2-B, found in Panax ginseng (Korean ginseng).